The sequence spans 379 residues: Tryptophan 2,3-dioxygenase (379 aa).

Substrate is bound by residues 57–61 (FIITH) and Arg128. Residue His312 participates in heme binding. Position 327 (Thr327) interacts with substrate.

It belongs to the tryptophan 2,3-dioxygenase family. As to quaternary structure, homotetramer. Dimer of dimers. It depends on heme as a cofactor.

It carries out the reaction L-tryptophan + O2 = N-formyl-L-kynurenine. It participates in amino-acid degradation; L-tryptophan degradation via kynurenine pathway; L-kynurenine from L-tryptophan: step 1/2. Its pathway is pigment biosynthesis; ommochrome biosynthesis. Its function is as follows. Heme-dependent dioxygenase that catalyzes the oxidative cleavage of the L-tryptophan (L-Trp) pyrrole ring and converts L-tryptophan to N-formyl-L-kynurenine. Catalyzes the oxidative cleavage of the indole moiety. Required during larval growth to control the level of potentially harmful free tryptophan in the hemolymph. In the adult the same reaction is the first step in the ommochrome biosynthetic pathway. This chain is Tryptophan 2,3-dioxygenase, found in Drosophila melanogaster (Fruit fly).